Reading from the N-terminus, the 343-residue chain is GTP 3',8-cyclase (343 aa).

A Radical SAM core domain is found at 19–244 (PYGRTISYLR…TDVDDSTGGP (226 aa)). A GTP-binding site is contributed by arginine 28. [4Fe-4S] cluster contacts are provided by cysteine 35 and cysteine 39. Residue tyrosine 41 participates in S-adenosyl-L-methionine binding. Position 42 (cysteine 42) interacts with [4Fe-4S] cluster. Arginine 77 provides a ligand contact to GTP. Glycine 81 provides a ligand contact to S-adenosyl-L-methionine. Residue threonine 111 participates in GTP binding. Serine 135 contacts S-adenosyl-L-methionine. Residue lysine 171 participates in GTP binding. Methionine 205 provides a ligand contact to S-adenosyl-L-methionine. Positions 268 and 271 each coordinate [4Fe-4S] cluster. 273 to 275 (RVR) contributes to the GTP binding site. Cysteine 285 provides a ligand contact to [4Fe-4S] cluster.

This sequence belongs to the radical SAM superfamily. MoaA family. Monomer and homodimer. Requires [4Fe-4S] cluster as cofactor.

It catalyses the reaction GTP + AH2 + S-adenosyl-L-methionine = (8S)-3',8-cyclo-7,8-dihydroguanosine 5'-triphosphate + 5'-deoxyadenosine + L-methionine + A + H(+). It functions in the pathway cofactor biosynthesis; molybdopterin biosynthesis. Functionally, catalyzes the cyclization of GTP to (8S)-3',8-cyclo-7,8-dihydroguanosine 5'-triphosphate. The sequence is that of GTP 3',8-cyclase from Nitrobacter hamburgensis (strain DSM 10229 / NCIMB 13809 / X14).